The sequence spans 134 residues: ATP synthase epsilon chain (134 aa).

This sequence belongs to the ATPase epsilon chain family. F-type ATPases have 2 components, CF(1) - the catalytic core - and CF(0) - the membrane proton channel. CF(1) has five subunits: alpha(3), beta(3), gamma(1), delta(1), epsilon(1). CF(0) has three main subunits: a, b and c.

The protein localises to the cellular thylakoid membrane. Produces ATP from ADP in the presence of a proton gradient across the membrane. This Prochlorococcus marinus (strain MIT 9215) protein is ATP synthase epsilon chain.